The chain runs to 235 residues: MANTALIGCTGMVGSFILNNLLAHPSVARVDTISRRTPQAASAAQTKLTTIVSDDTSRWASELSSLTPTPSIFFSAFATTRASAGGFENQYKIEHGLNVEMARAARDAGTKVYVLISSAGADKNAYFAYPRMKAEIEEDVKALGFERTVILRPGLIAGQREESRPMEAAIRCIAGFAGKIHSGLKDGWAQEADVIARAAVNAGLKALEGDVPTGSEKVWVLGGSDIIKYGAGSKN.

The transit peptide at 1-36 (MANTALIGCTGMVGSFILNNLLAHPSVARVDTISRR) directs the protein to the mitochondrion.

This sequence belongs to the FMP52 family.

The protein localises to the mitochondrion outer membrane. The chain is Protein fmp52-1, mitochondrial (fmp521) from Aspergillus oryzae (strain ATCC 42149 / RIB 40) (Yellow koji mold).